The following is a 285-amino-acid chain: Pantothenate synthetase (285 aa).

30–37 is a binding site for ATP; it reads MGFLHEGH. His-37 functions as the Proton donor in the catalytic mechanism. Position 61 (Gln-61) interacts with (R)-pantoate. Gln-61 lines the beta-alanine pocket. Residue 147–150 participates in ATP binding; that stretch reads GQKD. Residue Gln-153 participates in (R)-pantoate binding. Residues Val-176 and 184-187 contribute to the ATP site; that span reads KSSR.

Belongs to the pantothenate synthetase family. As to quaternary structure, homodimer.

It localises to the cytoplasm. It carries out the reaction (R)-pantoate + beta-alanine + ATP = (R)-pantothenate + AMP + diphosphate + H(+). It functions in the pathway cofactor biosynthesis; (R)-pantothenate biosynthesis; (R)-pantothenate from (R)-pantoate and beta-alanine: step 1/1. Its function is as follows. Catalyzes the condensation of pantoate with beta-alanine in an ATP-dependent reaction via a pantoyl-adenylate intermediate. The protein is Pantothenate synthetase of Listeria welshimeri serovar 6b (strain ATCC 35897 / DSM 20650 / CCUG 15529 / CIP 8149 / NCTC 11857 / SLCC 5334 / V8).